We begin with the raw amino-acid sequence, 377 residues long: MSVARLTTYNFRNLSSVAIDLHPKLNFFIGNNGSGKSSLLEALFFLGHGKSFRTSKVEHLACYETDNFVVSIKDVNDLQLGLSKNLQTGVTLIKINGERHARLSELAKNIAVQIVTPESFKLFFGGPKERRRFIELGMFHVKHDSSKQWREFNRVLKQRNACIRHNLDKATFDYWTGLFCQLSEQVAEVRSQYITNLISELPYWLEILLPNIADKVTVQYLQGWPQKKNLMDSLNDSHEREQAFGYSIYGAHKFDVKFLIAKQALESQLSRGQQKLFLLALTFAQAKLIARVNRVKPILLIDDIGAELDINSRESLSQALSILDCQVIITAIEEGVLQPFIDDVSVADKESSKKTKYHMFHVKHGGILPVNNSVKIE.

Position 30-37 (30-37) interacts with ATP; sequence GNNGSGKS.

This sequence belongs to the RecF family.

It localises to the cytoplasm. In terms of biological role, the RecF protein is involved in DNA metabolism; it is required for DNA replication and normal SOS inducibility. RecF binds preferentially to single-stranded, linear DNA. It also seems to bind ATP. The sequence is that of DNA replication and repair protein RecF from Colwellia psychrerythraea (strain 34H / ATCC BAA-681) (Vibrio psychroerythus).